The chain runs to 281 residues: Pantothenate synthetase (281 aa).

30 to 37 (MGNLHQGH) contacts ATP. The active-site Proton donor is H37. Q61 contacts (R)-pantoate. Q61 is a beta-alanine binding site. An ATP-binding site is contributed by 149 to 152 (GNKD). Q155 lines the (R)-pantoate pocket. Residues I178 and 186-189 (MSSR) contribute to the ATP site.

The protein belongs to the pantothenate synthetase family. Homodimer.

Its subcellular location is the cytoplasm. It catalyses the reaction (R)-pantoate + beta-alanine + ATP = (R)-pantothenate + AMP + diphosphate + H(+). It participates in cofactor biosynthesis; (R)-pantothenate biosynthesis; (R)-pantothenate from (R)-pantoate and beta-alanine: step 1/1. Its function is as follows. Catalyzes the condensation of pantoate with beta-alanine in an ATP-dependent reaction via a pantoyl-adenylate intermediate. The chain is Pantothenate synthetase from Shewanella sp. (strain MR-7).